The primary structure comprises 214 residues: Probable nicotinate-nucleotide adenylyltransferase (214 aa).

Belongs to the NadD family.

The catalysed reaction is nicotinate beta-D-ribonucleotide + ATP + H(+) = deamido-NAD(+) + diphosphate. Its pathway is cofactor biosynthesis; NAD(+) biosynthesis; deamido-NAD(+) from nicotinate D-ribonucleotide: step 1/1. In terms of biological role, catalyzes the reversible adenylation of nicotinate mononucleotide (NaMN) to nicotinic acid adenine dinucleotide (NaAD). The polypeptide is Probable nicotinate-nucleotide adenylyltransferase (Pseudomonas paraeruginosa (strain DSM 24068 / PA7) (Pseudomonas aeruginosa (strain PA7))).